A 465-amino-acid chain; its full sequence is Cysteine--tRNA ligase (465 aa).

Cys30 contacts Zn(2+). The 'HIGH' region motif lies at 32–42 (ITVYDYCHVGH). Positions 214, 239, and 243 each coordinate Zn(2+). The 'KMSKS' region motif lies at 271–275 (KMSKS). An ATP-binding site is contributed by Lys274.

This sequence belongs to the class-I aminoacyl-tRNA synthetase family. In terms of assembly, monomer. Zn(2+) is required as a cofactor.

The protein localises to the cytoplasm. The catalysed reaction is tRNA(Cys) + L-cysteine + ATP = L-cysteinyl-tRNA(Cys) + AMP + diphosphate. The protein is Cysteine--tRNA ligase of Burkholderia orbicola (strain MC0-3).